Here is an 85-residue protein sequence, read N- to C-terminus: UPF0410 protein YdaS (85 aa).

3 consecutive transmembrane segments (helical) span residues 2-22 (LSFLVSLVVAIVIGLIGSAIV), 28-48 (GGIFGSMIAGLIGAWIGHGLL), and 58-78 (FAIFPAIIGAAIFVFLLGLIF).

It belongs to the UPF0410 family.

Its subcellular location is the cell membrane. This is UPF0410 protein YdaS (ydaS) from Bacillus subtilis (strain 168).